A 420-amino-acid chain; its full sequence is 2',3'-cyclic-nucleotide 3'-phosphodiesterase (420 aa).

S9 carries the post-translational modification Phosphoserine. Phosphotyrosine is present on Y110. Phosphoserine occurs at positions 169, 227, and 239. H250 serves as the catalytic Proton acceptor. T252 is a substrate binding site. Phosphothreonine is present on T262. H329 serves as the catalytic Proton donor. T331 serves as a coordination point for substrate. At S358 the chain carries Phosphoserine. C417 bears the Cysteine methyl ester mark. C417 carries S-farnesyl cysteine lipidation. Residues 418 to 420 constitute a propeptide, removed in mature form; the sequence is TII.

The protein belongs to the 2H phosphoesterase superfamily. CNPase family. In terms of assembly, exists as monomers and homodimers.

The protein resides in the membrane. The protein localises to the melanosome. It catalyses the reaction a nucleoside 2',3'-cyclic phosphate + H2O = a nucleoside 2'-phosphate + H(+). Catalyzes the formation of 2'-nucleotide products from 2',3'-cyclic substrates. May participate in RNA metabolism in the myelinating cell, CNP is the third most abundant protein in central nervous system myelin. The polypeptide is 2',3'-cyclic-nucleotide 3'-phosphodiesterase (Rattus norvegicus (Rat)).